A 130-amino-acid polypeptide reads, in one-letter code: Small ribosomal subunit protein uS11 (130 aa).

The protein belongs to the universal ribosomal protein uS11 family. As to quaternary structure, part of the 30S ribosomal subunit. Interacts with proteins S7 and S18. Binds to IF-3.

Located on the platform of the 30S subunit, it bridges several disparate RNA helices of the 16S rRNA. Forms part of the Shine-Dalgarno cleft in the 70S ribosome. The sequence is that of Small ribosomal subunit protein uS11 from Synechococcus sp. (strain WH7803).